Reading from the N-terminus, the 351-residue chain is CCN family member 3 (351 aa).

The N-terminal stretch at Met-1–Asn-21 is a signal peptide. Residues Ala-25 to Pro-99 enclose the IGFBP N-terminal domain. Cystine bridges form between Cys-29/Cys-55, Cys-33/Cys-57, Cys-37/Cys-58, Cys-44/Cys-61, Cys-69/Cys-83, and Cys-75/Cys-96. An N-linked (GlcNAc...) asparagine glycan is attached at Asn-91. In terms of domain architecture, VWFC spans Asp-102–Gly-168. One can recognise a TSP type-1 domain in the interval Asn-199–Glu-244. Cys-238 carries S-palmitoyl cysteine lipidation. 5 disulfides stabilise this stretch: Cys-258/Cys-295, Cys-275/Cys-309, Cys-286/Cys-325, Cys-289/Cys-327, and Cys-294/Cys-331. A CTCK domain is found at Cys-258–Pro-332. N-linked (GlcNAc...) asparagine glycosylation occurs at Asn-274.

The protein belongs to the CCN family. Interacts with FBLN1. Interacts (via CTCK domain) with NOTCH1 (via the EGF-like repeat region). Interacts with GJA1/CX43. Interacts with ITGA5:ITGB1, ITGAV:ITGB3 and ITGAV:ITGB5. Interacts with ZDHHC22; the interaction may lead to CCN3 palmitoylation. May be palmitoylated on Cys-238, which is important for extracellular secretion. In terms of tissue distribution, widely expressed. Highly expressed in neurons of dorsal root ganglia and dorsal horn of the spinal cord (at protein level). Expressed in astrocytes (at protein level). In cartilage, dominantly expressed in the chondrocyte territorial matrix.

It is found in the secreted. The protein resides in the cytoplasm. Its subcellular location is the cell junction. The protein localises to the gap junction. Immediate-early protein playing a role in various cellular processes including proliferation, adhesion, migration, differentiation and survival. Acts by binding to integrins or membrane receptors such as NOTCH1. Essential regulator of hematopoietic stem and progenitor cell function. Inhibits myogenic differentiation through the activation of Notch-signaling pathway. Inhibits vascular smooth muscle cells proliferation by increasing expression of cell-cycle regulators such as CDKN2B or CDKN1A independently of TGFB1 signaling. Ligand of integrins ITGAV:ITGB3 and ITGA5:ITGB1, acts directly upon endothelial cells to stimulate pro-angiogenic activities and induces angiogenesis. In endothelial cells, supports cell adhesion, induces directed cell migration (chemotaxis) and promotes cell survival. Also plays a role in cutaneous wound healing acting as integrin receptor ligand. Supports skin fibroblast adhesion through ITGA5:ITGB1 and ITGA6:ITGB1 and induces fibroblast chemotaxis through ITGAV:ITGB5. Seems to enhance bFGF-induced DNA synthesis in fibroblasts. Involved in bone regeneration as a negative regulator. Enhances the articular chondrocytic phenotype, whereas it repressed the one representing endochondral ossification. Impairs pancreatic beta-cell function, inhibits beta-cell proliferation and insulin secretion. Plays a role as negative regulator of endothelial pro-inflammatory activation reducing monocyte adhesion, its anti-inflammatory effects occur secondary to the inhibition of NF-kappaB signaling pathway. Contributes to the control and coordination of inflammatory processes in atherosclerosis. Attenuates inflammatory pain through regulation of IL1B- and TNF-induced MMP9, MMP2 and CCL2 expression. Inhibits MMP9 expression through ITGB1 engagement. Brain osteoanabolic hormone. During lactation, maintains the maternal skeleton and viability of offspring. The polypeptide is CCN family member 3 (Ccn3) (Rattus norvegicus (Rat)).